The primary structure comprises 249 residues: NAD-dependent protein deacylase 2 (249 aa).

The 240-residue stretch at 1-240 (MNVADLLASS…PRLVEEVKRR (240 aa)) folds into the Deacetylase sirtuin-type domain. 18 to 37 (GAGISAESGVPTFRGPGGLW) contributes to the NAD(+) binding site. 2 residues coordinate substrate: Tyr62 and Arg65. 96–99 (QNVD) is a binding site for NAD(+). The active-site Proton acceptor is His114. Residues Cys122, Cys125, Cys142, and Cys145 each contribute to the Zn(2+) site. NAD(+)-binding positions include 182–184 (GTS), 208–210 (NVE), and Ala226.

It belongs to the sirtuin family. Class III subfamily. Requires Zn(2+) as cofactor.

It is found in the cytoplasm. It carries out the reaction N(6)-acetyl-L-lysyl-[protein] + NAD(+) + H2O = 2''-O-acetyl-ADP-D-ribose + nicotinamide + L-lysyl-[protein]. The enzyme catalyses N(6)-succinyl-L-lysyl-[protein] + NAD(+) + H2O = 2''-O-succinyl-ADP-D-ribose + nicotinamide + L-lysyl-[protein]. Its function is as follows. NAD-dependent lysine deacetylase and desuccinylase that specifically removes acetyl and succinyl groups on target proteins. Modulates the activities of several proteins which are inactive in their acylated form. Deacetylates the N-terminal lysine residue of Alba, the major archaeal chromatin protein and that, in turn, increases Alba's DNA binding affinity, thereby repressing transcription. This Pyrobaculum aerophilum (strain ATCC 51768 / DSM 7523 / JCM 9630 / CIP 104966 / NBRC 100827 / IM2) protein is NAD-dependent protein deacylase 2.